A 671-amino-acid polypeptide reads, in one-letter code: DNA ligase (671 aa).

NAD(+) is bound by residues 32 to 36, 81 to 82, and Glu113; these read DAEYD and SL. Residue Lys115 is the N6-AMP-lysine intermediate of the active site. Residues Arg136, Glu173, Lys290, and Lys314 each coordinate NAD(+). Zn(2+)-binding residues include Cys408, Cys411, Cys426, and Cys432. The BRCT domain occupies 593–671; sequence EIDSPFAGKT…EAEMLRLLGS (79 aa).

Belongs to the NAD-dependent DNA ligase family. LigA subfamily. Mg(2+) is required as a cofactor. It depends on Mn(2+) as a cofactor.

The catalysed reaction is NAD(+) + (deoxyribonucleotide)n-3'-hydroxyl + 5'-phospho-(deoxyribonucleotide)m = (deoxyribonucleotide)n+m + AMP + beta-nicotinamide D-nucleotide.. DNA ligase that catalyzes the formation of phosphodiester linkages between 5'-phosphoryl and 3'-hydroxyl groups in double-stranded DNA using NAD as a coenzyme and as the energy source for the reaction. It is essential for DNA replication and repair of damaged DNA. The sequence is that of DNA ligase from Shigella dysenteriae serotype 1 (strain Sd197).